The primary structure comprises 287 residues: Pentatricopeptide repeat-containing protein At4g18975, chloroplastic (287 aa).

Residues M1–R34 constitute a chloroplast transit peptide. PPR repeat units lie at residues T165–S199 and P201–P235.

It belongs to the PPR family. P subfamily.

The protein localises to the plastid. It localises to the chloroplast. The chain is Pentatricopeptide repeat-containing protein At4g18975, chloroplastic from Arabidopsis thaliana (Mouse-ear cress).